Consider the following 104-residue polypeptide: Ribonuclease P protein component 4 (104 aa).

Residues C63, C66, C89, and C92 each coordinate Zn(2+).

The protein belongs to the eukaryotic/archaeal RNase P protein component 4 family. In terms of assembly, consists of a catalytic RNA component and at least 4-5 protein subunits. Zn(2+) is required as a cofactor.

The protein resides in the cytoplasm. The catalysed reaction is Endonucleolytic cleavage of RNA, removing 5'-extranucleotides from tRNA precursor.. Its function is as follows. Part of ribonuclease P, a protein complex that generates mature tRNA molecules by cleaving their 5'-ends. The protein is Ribonuclease P protein component 4 of Methanoregula boonei (strain DSM 21154 / JCM 14090 / 6A8).